We begin with the raw amino-acid sequence, 92 residues long: C-C motif chemokine 4 (92 aa).

The signal sequence occupies residues 1-23 (MKLCVTVLSLLVLMAAFCSPALS). 2 cysteine pairs are disulfide-bonded: Cys-34-Cys-58 and Cys-35-Cys-74.

Belongs to the intercrine beta (chemokine CC) family. In terms of assembly, homodimer. Interacts with CCR5.

The protein localises to the secreted. Functionally, monokine with inflammatory and chemokinetic properties. The protein is C-C motif chemokine 4 (CCL4) of Bos taurus (Bovine).